A 111-amino-acid chain; its full sequence is Cytochrome c (111 aa).

Residue alanine 1 is modified to N-acetylalanine. The heme c site is built by cysteine 22, cysteine 25, and histidine 26. The residue at position 80 (lysine 80) is an N6,N6,N6-trimethyllysine. Heme c is bound at residue methionine 88. Residue lysine 94 is modified to N6,N6,N6-trimethyllysine.

This sequence belongs to the cytochrome c family. In terms of processing, binds 1 heme c group covalently per subunit.

It is found in the mitochondrion intermembrane space. Its function is as follows. Electron carrier protein. The oxidized form of the cytochrome c heme group can accept an electron from the heme group of the cytochrome c1 subunit of cytochrome reductase. Cytochrome c then transfers this electron to the cytochrome oxidase complex, the final protein carrier in the mitochondrial electron-transport chain. The chain is Cytochrome c from Brassica napus (Rape).